The primary structure comprises 128 residues: Global transcriptional regulator Spx 1 (128 aa).

An intrachain disulfide couples Cys-10 to Cys-13.

The protein belongs to the ArsC family. Spx subfamily. In terms of assembly, interacts with the C-terminal domain of the alpha subunit of the RNAP.

The protein resides in the cytoplasm. Its function is as follows. Global transcriptional regulator that plays a key role in stress response and exerts either positive or negative regulation of genes. Acts by interacting with the C-terminal domain of the alpha subunit of the RNA polymerase (RNAP). This interaction can enhance binding of RNAP to the promoter region of target genes and stimulate their transcription, or block interaction of RNAP with activator. This chain is Global transcriptional regulator Spx 1, found in Lactococcus lactis subsp. lactis (strain IL1403) (Streptococcus lactis).